The chain runs to 599 residues: Elongation factor 4 (599 aa).

Residues 2-184 (KHIRNFSIIA…RLVRDIPPPE (183 aa)) enclose the tr-type G domain. GTP is bound by residues 14–19 (DHGKST) and 131–134 (NKID).

Belongs to the TRAFAC class translation factor GTPase superfamily. Classic translation factor GTPase family. LepA subfamily.

The protein resides in the cell inner membrane. It catalyses the reaction GTP + H2O = GDP + phosphate + H(+). In terms of biological role, required for accurate and efficient protein synthesis under certain stress conditions. May act as a fidelity factor of the translation reaction, by catalyzing a one-codon backward translocation of tRNAs on improperly translocated ribosomes. Back-translocation proceeds from a post-translocation (POST) complex to a pre-translocation (PRE) complex, thus giving elongation factor G a second chance to translocate the tRNAs correctly. Binds to ribosomes in a GTP-dependent manner. This is Elongation factor 4 from Erwinia tasmaniensis (strain DSM 17950 / CFBP 7177 / CIP 109463 / NCPPB 4357 / Et1/99).